Consider the following 1006-residue polypeptide: Beta-galactosidase (1006 aa).

The signal sequence occupies residues M1–A19. N156 carries N-linked (GlcNAc...) asparagine glycosylation. The active-site Proton donor is E200. E298 functions as the Nucleophile in the catalytic mechanism. N-linked (GlcNAc...) asparagine glycosylation is found at N373, N402, N422, N478, N522, N622, N739, N760, N777, and N805.

It belongs to the glycosyl hydrolase 35 family.

The catalysed reaction is Hydrolysis of terminal non-reducing beta-D-galactose residues in beta-D-galactosides.. Cleaves beta-linked terminal galactosyl residues from gangliosides, glycoproteins, and glycosaminoglycans. The chain is Beta-galactosidase (lacA) from Aspergillus niger.